The chain runs to 37 residues: U1-ectatotoxin-Eb1a subunit B (37 aa).

This sequence belongs to the ectatomin family. Ectatomin-Eq subfamily. In terms of assembly, heterodimer of subunits A and B; disulfide-linked. In terms of tissue distribution, expressed by the venom gland.

It is found in the secreted. The protein localises to the target cell membrane. The protein is U1-ectatotoxin-Eb1a subunit B of Ectatomma brunneum (Ant).